Consider the following 715-residue polypeptide: Putative pentatricopeptide repeat-containing protein At3g23330 (715 aa).

13 PPR repeats span residues 38–68 (SHTS…LKSP), 69–103 (PVLA…GRCP), 104–138 (DHNV…GMDC), 139–172 (DLYT…MPQR), 206–240 (DVVS…DLKP), 241–275 (DSFT…GIDS), 276–306 (DVYI…LYCR), 307–341 (DGIS…KVKP), 342–376 (GAVA…GFGS), 377–407 (NIFI…MNVL), 408–442 (DEVS…GVKP), 443–473 (NQVA…MTKV), and 479–509 (ELEH…MCVE). The segment at 514–589 (VWSTLLSSCS…KPACSWIEMK (76 aa)) is type E motif. Residues 590–620 (NKTHGFVSGDRSHPSMDKINEFLKAVMEQME) are type E(+) motif. Residues 621–715 (KEGYVADTSG…RGNCSCGDYW (95 aa)) are type DYW motif.

The protein belongs to the PPR family. PCMP-H subfamily.

This chain is Putative pentatricopeptide repeat-containing protein At3g23330 (PCMP-H32), found in Arabidopsis thaliana (Mouse-ear cress).